The following is a 214-amino-acid chain: Probable GTP-binding protein EngB (214 aa).

Residues 25–203 (EGAEVAFAGR…EQVITGWLNL (179 aa)) form the EngB-type G domain. Residues 33 to 40 (GRSNAGKS), 60 to 64 (GRTQL), 80 to 83 (DLPG), 147 to 150 (TKSD), and 182 to 184 (FSS) each bind GTP. Mg(2+) contacts are provided by Ser40 and Thr62.

The protein belongs to the TRAFAC class TrmE-Era-EngA-EngB-Septin-like GTPase superfamily. EngB GTPase family. Mg(2+) serves as cofactor.

Its function is as follows. Necessary for normal cell division and for the maintenance of normal septation. This is Probable GTP-binding protein EngB from Teredinibacter turnerae (strain ATCC 39867 / T7901).